The following is a 316-amino-acid chain: Protoheme IX farnesyltransferase 2 (316 aa).

A compositionally biased stretch (polar residues) spans 1 to 15 (MEQNLNSEQKPQSSA). The interval 1 to 24 (MEQNLNSEQKPQSSAKPRGKSSRS) is disordered. The next 7 membrane-spanning stretches (helical) occupy residues 62-82 (IPEM…AGAF), 117-137 (IVML…AAAF), 163-183 (IGSI…STDI), 188-208 (IARF…AIAI), 231-251 (TYYQ…LFGS), 252-272 (LSVG…VMSI), and 293-313 (LFHM…GVIF).

The protein belongs to the UbiA prenyltransferase family. Protoheme IX farnesyltransferase subfamily. As to quaternary structure, interacts with CtaA.

Its subcellular location is the cell membrane. The enzyme catalyses heme b + (2E,6E)-farnesyl diphosphate + H2O = Fe(II)-heme o + diphosphate. It participates in porphyrin-containing compound metabolism; heme O biosynthesis; heme O from protoheme: step 1/1. Functionally, converts heme B (protoheme IX) to heme O by substitution of the vinyl group on carbon 2 of heme B porphyrin ring with a hydroxyethyl farnesyl side group. The protein is Protoheme IX farnesyltransferase 2 of Lysinibacillus sphaericus (strain C3-41).